We begin with the raw amino-acid sequence, 649 residues long: DNA topoisomerase 3 (649 aa).

The region spanning 1–134 (MRLFIAEKPS…KRQQVRRCLI (134 aa)) is the Toprim domain. Mg(2+) contacts are provided by Glu7, Asp103, and Asp105. The Topo IA-type catalytic domain maps to 155–603 (FVPLCVSALA…PLVGTLYQLI (449 aa)). The interaction with DNA stretch occupies residues 194–199 (SVGRVQ). Tyr328 serves as the catalytic O-(5'-phospho-DNA)-tyrosine intermediate. Residues 614-649 (FRGIVAPGGGDKKKSAPRKRAGKKSPPAAETGRQTE) are disordered.

Belongs to the type IA topoisomerase family. The cofactor is Mg(2+).

The catalysed reaction is ATP-independent breakage of single-stranded DNA, followed by passage and rejoining.. In terms of biological role, releases the supercoiling and torsional tension of DNA, which is introduced during the DNA replication and transcription, by transiently cleaving and rejoining one strand of the DNA duplex. Introduces a single-strand break via transesterification at a target site in duplex DNA. The scissile phosphodiester is attacked by the catalytic tyrosine of the enzyme, resulting in the formation of a DNA-(5'-phosphotyrosyl)-enzyme intermediate and the expulsion of a 3'-OH DNA strand. The free DNA strand then undergoes passage around the unbroken strand, thus removing DNA supercoils. Finally, in the religation step, the DNA 3'-OH attacks the covalent intermediate to expel the active-site tyrosine and restore the DNA phosphodiester backbone. This is DNA topoisomerase 3 from Salmonella typhimurium (strain LT2 / SGSC1412 / ATCC 700720).